The chain runs to 348 residues: MSPFQSLLWTGSQLRLLDQRSLPQETQYRYYDTAAGVAQAIQDMVVRGAPAIGVAAAFGLVLTSQQSAMTDSADLRAQLAIAAETLKAARPTAVNLAWAVDRMLAAIANPDLEAAAIHATLLAAAQQLYDEDVAVNRQIGLNAQALIPQQANVIHHCNTGALATVDYGTALGIIRIAHEQGKQIHAYLDETRPRLQGANLSAFELQAYGVPHTVIVDGASGFLMRQQQIDCCLVGCDRVTANGDVANKIGTYNLALAAKAHGVPFYVACPISTIDRSLATGAEIEIEERDGREITEIRGQAIAPAGTKTWNPAFDITPAELVTAIITERGILYPPYGQALEQVLINPG.

Residues 47 to 49, arginine 90, and glutamine 196 each bind substrate; that span reads RGA. The active-site Proton donor is the aspartate 237. 247 to 248 provides a ligand contact to substrate; it reads NK.

Belongs to the eIF-2B alpha/beta/delta subunits family. MtnA subfamily.

It catalyses the reaction 5-(methylsulfanyl)-alpha-D-ribose 1-phosphate = 5-(methylsulfanyl)-D-ribulose 1-phosphate. It functions in the pathway amino-acid biosynthesis; L-methionine biosynthesis via salvage pathway; L-methionine from S-methyl-5-thio-alpha-D-ribose 1-phosphate: step 1/6. Functionally, catalyzes the interconversion of methylthioribose-1-phosphate (MTR-1-P) into methylthioribulose-1-phosphate (MTRu-1-P). The chain is Methylthioribose-1-phosphate isomerase from Synechococcus sp. (strain ATCC 27144 / PCC 6301 / SAUG 1402/1) (Anacystis nidulans).